Consider the following 147-residue polypeptide: MVHFTAEEKAAITSLWGKMNVEEAGGESLGRLLVVYPWTQRFFDNFGNLSSPSAILGNPKVKAHGKKVLTSFGDAIKNMDNLKTTFAKLSELHCDKLHVDPENFRLLGNVMVIILATHFGKEFTPEVQAAWQKLVSAVAIALGHKYH.

The Globin domain occupies 3-147 (HFTAEEKAAI…VAIALGHKYH (145 aa)). Phosphoserine is present on residues Ser-14 and Ser-51. Heme b-binding residues include His-64 and His-93.

It belongs to the globin family. As to quaternary structure, heterotetramer of two alpha chains and two epsilon chains in early embryonic hemoglobin Gower-2; two zeta chains and two epsilon chains in early embryonic hemoglobin Gower-1. In terms of tissue distribution, red blood cells.

The epsilon chain is a beta-type chain of early mammalian embryonic hemoglobin. The protein is Hemoglobin subunit epsilon (HBE1) of Leontopithecus rosalia (Golden lion tamarin).